The primary structure comprises 140 residues: Type II secretion system core protein G (140 aa).

A propeptide spans 1 to 6 (MQRQRG) (leader sequence). Phe7 is subject to N-methylphenylalanine. The helical transmembrane segment at 7–27 (FTLLEIMVVIVILGVLASLVV) threads the bilayer. Positions 120–140 (LGPDGVPESNDDIGNWTIGKK) are disordered.

The protein belongs to the GSP G family. Type II secretion system is composed of four main components: the outer membrane complex, the inner membrane complex, the cytoplasmic secretion ATPase and the periplasm-spanning pseudopilus. Forms homomultimers. Cleaved by the prepilin peptidase. Post-translationally, methylated by prepilin peptidase at the amino group of the N-terminal phenylalanine once the leader sequence is cleaved.

Its subcellular location is the cell inner membrane. Functionally, core component of the type II secretion system required for the energy-dependent secretion of extracellular factors such as proteases and toxins from the periplasm. Pseudopilin (pilin-like) protein that polymerizes to form the pseudopilus. Further polymerization triggers pseudopilus growth. This is Type II secretion system core protein G (pulG) from Klebsiella pneumoniae.